The following is a 492-amino-acid chain: MTSKIALFDQTLIASLLQPLSLNQPDFKAYKTKVKLKISEQRNETSGEKELKFEISRSDDFEFLFSETLNNEKYQILARDHDLTVDFDAFPKVIIQHLLCKNIVKNLEEDGEVDARKKAGYHSIADPGKPTEINIILDAEKNFCSFELFSKTPISKGKIFSIKLHAVRGDHLISHLLKICSSQAVKLSTFYKSADELASLRQKCGDLEKQVEKLSGVKEEFEEMSEKFKELEDEVELVKEERENIRLLVEDKEDEVADLKQDTESLQKQLEENQEELEIVGNMLREEQGKVDQLQKRNVAHQKEIGKLRAELGTAQRNLEKADQLLKRNSQQQNQQSLDMRKLGELEADLKEKDSMVESLTETIGILRKELENEKLKAAENMDSFEKLSMENENLKEKIAHYRAQRFSPAPSGLPGLQTGLTNRLTPSFKPVLGPHTPYGANLNSRTPFRDNTTLNFQNSTIATPHAFRFNSQLIADETTGSSVTNTPPAQR.

The region spanning 46–98 (SGEKELKFEISRSDDFEFLFSETLNNEKYQILARDHDLTVDFDAFPKVIIQHL) is the PISA domain. The stretch at 192 to 407 (KSADELASLR…KIAHYRAQRF (216 aa)) forms a coiled coil.

As to quaternary structure, nine homodimers form a cartwheel structure with an internal diameter of 23 nM and radial spokes connecting to the microtubule triplets. Interacts with sas-5.

The protein resides in the cytoplasm. Its subcellular location is the cytoskeleton. It is found in the microtubule organizing center. The protein localises to the centrosome. It localises to the centriole. In terms of biological role, central scaffolding component of the centrioles ensuring their 9-fold symmetry. Required for centrosome biogenesis and duplication. The sequence is that of Spindle assembly abnormal protein 6 from Caenorhabditis elegans.